A 284-amino-acid chain; its full sequence is Ribose-phosphate pyrophosphokinase 1 (284 aa).

Position 34 to 36 (34 to 36 (DGE)) interacts with ATP. Residues H126 and D163 each contribute to the Mg(2+) site. The active site involves K186. D-ribose 5-phosphate is bound by residues R188, D211, and 215 to 219 (STGGT).

It belongs to the ribose-phosphate pyrophosphokinase family. Class III (archaeal) subfamily. Requires Mg(2+) as cofactor.

It is found in the cytoplasm. The enzyme catalyses D-ribose 5-phosphate + ATP = 5-phospho-alpha-D-ribose 1-diphosphate + AMP + H(+). Its pathway is metabolic intermediate biosynthesis; 5-phospho-alpha-D-ribose 1-diphosphate biosynthesis; 5-phospho-alpha-D-ribose 1-diphosphate from D-ribose 5-phosphate (route I): step 1/1. Involved in the biosynthesis of the central metabolite phospho-alpha-D-ribosyl-1-pyrophosphate (PRPP) via the transfer of pyrophosphoryl group from ATP to 1-hydroxyl of ribose-5-phosphate (Rib-5-P). The sequence is that of Ribose-phosphate pyrophosphokinase 1 from Archaeoglobus fulgidus (strain ATCC 49558 / DSM 4304 / JCM 9628 / NBRC 100126 / VC-16).